We begin with the raw amino-acid sequence, 459 residues long: Alcohol acyl transferase 1 allele GSd (459 aa).

Catalysis depends on proton acceptor residues His164 and Asn385.

It belongs to the plant acyltransferase family. As to expression, expressed at very low levels in the cortex and skin of ripe fruit.

Its function is as follows. Involved in the biosynthesis of volatile esters which confer ripe apple fruit flavor. Alcohol acyl transferase that can use a wide range of alcohols as substrate to produce esters. The protein is Alcohol acyl transferase 1 allele GSd of Malus domestica (Apple).